The primary structure comprises 153 residues: uncharacterized protein (153 aa).

The interval 72-98 (LPISKTNDAERSQQTTKAPVMERTESS) is disordered.

The protein resides in the cytoplasm. It is found in the nucleus. This is an uncharacterized protein from Schizosaccharomyces pombe (strain 972 / ATCC 24843) (Fission yeast).